A 376-amino-acid chain; its full sequence is Anhydro-N-acetylmuramic acid kinase (376 aa).

An ATP-binding site is contributed by 22 to 29 (GTSMDGAD).

The protein belongs to the anhydro-N-acetylmuramic acid kinase family.

It carries out the reaction 1,6-anhydro-N-acetyl-beta-muramate + ATP + H2O = N-acetyl-D-muramate 6-phosphate + ADP + H(+). The protein operates within amino-sugar metabolism; 1,6-anhydro-N-acetylmuramate degradation. It functions in the pathway cell wall biogenesis; peptidoglycan recycling. Functionally, catalyzes the specific phosphorylation of 1,6-anhydro-N-acetylmuramic acid (anhMurNAc) with the simultaneous cleavage of the 1,6-anhydro ring, generating MurNAc-6-P. Is required for the utilization of anhMurNAc either imported from the medium or derived from its own cell wall murein, and thus plays a role in cell wall recycling. This Neisseria gonorrhoeae (strain NCCP11945) protein is Anhydro-N-acetylmuramic acid kinase.